Consider the following 83-residue polypeptide: Apolipoprotein C-I, basic form (83 aa).

Residues 1–26 (MRLFLSLPVLVVVLSMVLEGPAPAQG) form the signal peptide.

This sequence belongs to the apolipoprotein C1 family.

The protein localises to the secreted. In terms of biological role, inhibitor of lipoprotein binding to the low density lipoprotein (LDL) receptor, LDL receptor-related protein, and very low density lipoprotein (VLDL) receptor. Associates with high density lipoproteins (HDL) and the triacylglycerol-rich lipoproteins in the plasma and makes up about 10% of the protein of the VLDL and 2% of that of HDL. Appears to interfere directly with fatty acid uptake and is also the major plasma inhibitor of cholesteryl ester transfer protein (CETP). Binds free fatty acids and reduces their intracellular esterification. Modulates the interaction of APOE with beta-migrating VLDL and inhibits binding of beta-VLDL to the LDL receptor-related protein. This Colobus guereza (Mantled guereza) protein is Apolipoprotein C-I, basic form (APOC1B).